A 412-amino-acid chain; its full sequence is Mast cell carboxypeptidase A (412 aa).

The N-terminal stretch at 1–10 (LMGVIYSTLA) is a signal peptide. Residues 11 to 104 (IAPVQFDREK…IDKQFDVKEE (94 aa)) constitute a propeptide, activation peptide. The Peptidase M14 domain occupies 113 to 407 (KYNDWNKIVS…LSVKFIAKYI (295 aa)). 2 cysteine pairs are disulfide-bonded: Cys168-Cys181 and Cys240-Cys263. Residues His171 and Glu174 each contribute to the Zn(2+) site. A Zn(2+)-binding site is contributed by His299. Glu373 (proton donor/acceptor) is an active-site residue.

It belongs to the peptidase M14 family. Zn(2+) serves as cofactor.

The protein localises to the cytoplasmic vesicle. Its subcellular location is the secretory vesicle. The enzyme catalyses Release of a C-terminal amino acid, but little or no action with -Asp, -Glu, -Arg, -Lys or -Pro.. This is Mast cell carboxypeptidase A (Cpa3) from Rattus norvegicus (Rat).